A 253-amino-acid chain; its full sequence is Acidic endochitinase pcht28 (253 aa).

The N-terminal stretch at Met1–Ala24 is a signal peptide. The Proton donor role is filled by Glu92. Cys212 and Cys244 are disulfide-bonded.

It belongs to the glycosyl hydrolase 19 family. Chitinase class II subfamily.

The protein localises to the secreted. It localises to the extracellular space. It catalyses the reaction Random endo-hydrolysis of N-acetyl-beta-D-glucosaminide (1-&gt;4)-beta-linkages in chitin and chitodextrins.. In terms of biological role, defense against chitin-containing fungal pathogens. In Solanum chilense (Tomato), this protein is Acidic endochitinase pcht28.